The primary structure comprises 235 residues: BPI fold-containing family A member 2 (235 aa).

The signal sequence occupies residues 1 to 20 (MFQLGSLVVLCGLLIGNSES). Cysteines 161 and 204 form a disulfide.

It belongs to the BPI/LBP/Plunc superfamily. Plunc family. In terms of tissue distribution, predominates in the parotid glands, present in smaller amounts (1/10) in the submaxillary glands and in the sublingual glands, and at lower amount in the pancreas but undetectable in the liver. Found also in lacrimal gland.

It localises to the secreted. Has strong antibacterial activity against P.aeruginosa. The polypeptide is BPI fold-containing family A member 2 (Bpifa2) (Mus musculus (Mouse)).